The primary structure comprises 242 residues: 7-cyano-7-deazaguanine synthase (242 aa).

ATP is bound at residue 13 to 23 (FSGGQDSSVCL). Zn(2+) contacts are provided by Cys201, Cys216, Cys219, and Cys222.

This sequence belongs to the QueC family. It depends on Zn(2+) as a cofactor.

It carries out the reaction 7-carboxy-7-deazaguanine + NH4(+) + ATP = 7-cyano-7-deazaguanine + ADP + phosphate + H2O + H(+). It participates in purine metabolism; 7-cyano-7-deazaguanine biosynthesis. Catalyzes the ATP-dependent conversion of 7-carboxy-7-deazaguanine (CDG) to 7-cyano-7-deazaguanine (preQ(0)). The polypeptide is 7-cyano-7-deazaguanine synthase (Caulobacter vibrioides (strain ATCC 19089 / CIP 103742 / CB 15) (Caulobacter crescentus)).